A 1083-amino-acid polypeptide reads, in one-letter code: DNA primase (1083 aa).

A CHC2-type zinc finger spans residues 1022–1061; it reads CLRYPHRGGRTAPRTFVSLRVDHHNRLCISLAQQCFATKC.

This sequence belongs to the herpesviridae DNA primase family. In terms of assembly, associates with the helicase and the primase-associated factor to form the helicase-primase factor.

The protein localises to the host nucleus. In terms of biological role, essential component of the helicase/primase complex. Unwinds the DNA at the replication forks and generates single-stranded DNA for both leading and lagging strand synthesis. The primase initiates primer synthesis and thereby produces large amount of short RNA primers on the lagging strand that the polymerase elongates using dNTPs. This chain is DNA primase, found in Varicella-zoster virus (strain Oka vaccine) (HHV-3).